The following is a 184-amino-acid chain: Ras-related protein Rap-1b (184 aa).

10–17 (GSGGVGKS) provides a ligand contact to GTP. Residues 32 to 40 (YDPTIEDSY) carry the Effector region motif. Residues 57-61 (DTAGT) and 116-119 (NKCD) each bind GTP. Cysteine 181 carries the cysteine methyl ester modification. Cysteine 181 is lipidated: S-geranylgeranyl cysteine. Residues 182-184 (HLL) constitute a propeptide, removed in mature form.

It belongs to the small GTPase superfamily. Ras family.

It is found in the cell membrane. Its subcellular location is the cytoplasm. It localises to the cytosol. The protein localises to the cell junction. It carries out the reaction GTP + H2O = GDP + phosphate + H(+). Probable GTP-binding protein that possesses GTPase activity. May play a role in endothelial cell polarity and endothelial barrier function. The chain is Ras-related protein Rap-1b (rap1b) from Xenopus laevis (African clawed frog).